The sequence spans 190 residues: MSLLTVWPDTDAGTVELRTEDPQEITDVLKQFGVSFSRWELRELPERPSSEEVLEAYRAEVDEVIEREGYIKVDAAVMAPSQDPQWPAQAKAAREKFLSEHTHDDDEDRFFARGAGVFYLHIGDRVYAMLCEAGDLLSVPANTTHWFDMGTEPDFVAIRFFHDDDGWVGAFLNTDTAEKFPTFDELMASR.

Residues H101, H103, E107, and H145 each contribute to the Fe(2+) site. Ni(2+)-binding residues include H101, H103, E107, and H145.

The protein belongs to the acireductone dioxygenase (ARD) family. In terms of assembly, monomer. Fe(2+) is required as a cofactor. The cofactor is Ni(2+).

It carries out the reaction 1,2-dihydroxy-5-(methylsulfanyl)pent-1-en-3-one + O2 = 3-(methylsulfanyl)propanoate + CO + formate + 2 H(+). It catalyses the reaction 1,2-dihydroxy-5-(methylsulfanyl)pent-1-en-3-one + O2 = 4-methylsulfanyl-2-oxobutanoate + formate + 2 H(+). Its pathway is amino-acid biosynthesis; L-methionine biosynthesis via salvage pathway; L-methionine from S-methyl-5-thio-alpha-D-ribose 1-phosphate: step 5/6. Catalyzes 2 different reactions between oxygen and the acireductone 1,2-dihydroxy-3-keto-5-methylthiopentene (DHK-MTPene) depending upon the metal bound in the active site. Fe-containing acireductone dioxygenase (Fe-ARD) produces formate and 2-keto-4-methylthiobutyrate (KMTB), the alpha-ketoacid precursor of methionine in the methionine recycle pathway. Ni-containing acireductone dioxygenase (Ni-ARD) produces methylthiopropionate, carbon monoxide and formate, and does not lie on the methionine recycle pathway. This is Acireductone dioxygenase from Saccharopolyspora erythraea (strain ATCC 11635 / DSM 40517 / JCM 4748 / NBRC 13426 / NCIMB 8594 / NRRL 2338).